Here is a 59-residue protein sequence, read N- to C-terminus: Large ribosomal subunit protein bL32 (59 aa).

It belongs to the bacterial ribosomal protein bL32 family.

The protein is Large ribosomal subunit protein bL32 of Mesoplasma florum (strain ATCC 33453 / NBRC 100688 / NCTC 11704 / L1) (Acholeplasma florum).